Here is a 454-residue protein sequence, read N- to C-terminus: Glutamyl-tRNA(Gln) amidotransferase subunit A (454 aa).

Catalysis depends on charge relay system residues lysine 56 and serine 131. Serine 155 functions as the Acyl-ester intermediate in the catalytic mechanism.

The protein belongs to the amidase family. GatA subfamily. In terms of assembly, heterotrimer of A, B and C subunits.

It catalyses the reaction L-glutamyl-tRNA(Gln) + L-glutamine + ATP + H2O = L-glutaminyl-tRNA(Gln) + L-glutamate + ADP + phosphate + H(+). Functionally, allows the formation of correctly charged Gln-tRNA(Gln) through the transamidation of misacylated Glu-tRNA(Gln) in organisms which lack glutaminyl-tRNA synthetase. The reaction takes place in the presence of glutamine and ATP through an activated gamma-phospho-Glu-tRNA(Gln). The protein is Glutamyl-tRNA(Gln) amidotransferase subunit A of Campylobacter lari (strain RM2100 / D67 / ATCC BAA-1060).